Reading from the N-terminus, the 636-residue chain is Asparagine synthetase domain-containing protein 1 (636 aa).

Cysteine 2 (nucleophile) is an active-site residue. The Glutamine amidotransferase type-2 domain occupies 2–187; the sequence is CGICCVVALS…ASGIFKMDLR (186 aa). Positions 291-607 constitute an Asparagine synthetase domain; that stretch reads QFIDVLDEAV…GLEAASILPK (317 aa).

The chain is Asparagine synthetase domain-containing protein 1 (ASNSD1) from Gallus gallus (Chicken).